A 166-amino-acid chain; its full sequence is Protein-export protein SecB (166 aa).

Belongs to the SecB family. As to quaternary structure, homotetramer, a dimer of dimers. One homotetramer interacts with 1 SecA dimer.

It is found in the cytoplasm. Functionally, one of the proteins required for the normal export of preproteins out of the cell cytoplasm. It is a molecular chaperone that binds to a subset of precursor proteins, maintaining them in a translocation-competent state. It also specifically binds to its receptor SecA. This is Protein-export protein SecB from Sinorhizobium fredii (strain NBRC 101917 / NGR234).